Here is a 276-residue protein sequence, read N- to C-terminus: Kallikrein-10 (276 aa).

Positions 1 to 30 are cleaved as a signal peptide; the sequence is MRAPHLHLSAASGARALAKLLPLLMAQLWA. N-linked (GlcNAc...) asparagine glycosylation occurs at Asn-39. The Peptidase S1 domain maps to 47-274; that stretch reads AYGSPCARGS…YMSWINKVIR (228 aa). 5 disulfides stabilise this stretch: Cys-52–Cys-162, Cys-71–Cys-87, Cys-169–Cys-235, Cys-201–Cys-215, and Cys-225–Cys-250. Residues His-86 and Asp-137 each act as charge relay system in the active site. Catalysis depends on Ser-229, which acts as the Charge relay system.

This sequence belongs to the peptidase S1 family. Kallikrein subfamily. As to expression, expressed in breast, ovary and prostate.

It localises to the secreted. Functionally, has a tumor-suppressor role for NES1 in breast and prostate cancer. This Homo sapiens (Human) protein is Kallikrein-10 (KLK10).